We begin with the raw amino-acid sequence, 149 residues long: Large ribosomal subunit protein bL9 (149 aa).

The protein belongs to the bacterial ribosomal protein bL9 family.

Its function is as follows. Binds to the 23S rRNA. This chain is Large ribosomal subunit protein bL9, found in Klebsiella pneumoniae (strain 342).